Reading from the N-terminus, the 514-residue chain is Butyrophilin subfamily 2 member A2 (514 aa).

The N-terminal stretch at 1 to 29 (MEPTTSLRSCPIASLLFFLVLSLFVLVSA) is a signal peptide. The Ig-like V-type domain maps to 30-142 (QFTVIGPAEP…SYDQATMKLM (113 aa)). Topologically, residues 30–244 (QFTVIGPAEP…ILIPESFVPS (215 aa)) are extracellular. N-linked (GlcNAc...) asparagine glycans are attached at residues Asn-47 and Asn-115. Disulfide bonds link Cys-52-Cys-126 and Cys-166-Cys-220. The region spanning 150–232 (PLIKMKTLED…NNTLLSQEVE (83 aa)) is the Ig-like C2-type domain. A helical membrane pass occupies residues 245 to 265 (LPLWMVAVAVTLPVVMLILLT). Over 266–514 (SGSICLVKKH…PISQSLVRKP (249 aa)) the chain is Cytoplasmic. The stretch at 281 to 304 (ILSAEKEAEYEEKEAARQLQEELR) forms a coiled coil. Residues 295-488 (AARQLQEELR…LFICPAFTGA (194 aa)) form the B30.2/SPRY domain.

The protein belongs to the immunoglobulin superfamily. BTN/MOG family. In terms of processing, N-glycosylated. Widely expressed (at protein level). In the thymus, restricted to the corticomedullary junction, but not confined solely to epithelial cells (at protein level). Significant expression on naive B-cells, splenic natural killer cells, dendritic cells and peritoneal macrophages (at protein level). Negligible expression on naive T-cells up-regulated on activated T-cells (at protein level).

Its subcellular location is the membrane. Its function is as follows. Inhibits the proliferation of CD4 and CD8 T-cells activated by anti-CD3 antibodies, T-cell metabolism and IL2 and IFNG secretion. This Mus musculus (Mouse) protein is Butyrophilin subfamily 2 member A2 (Btn2a2).